We begin with the raw amino-acid sequence, 402 residues long: Odorant receptor 22c (402 aa).

The Cytoplasmic segment spans residues 1-42 (MTDSGQPAIADHFYRIPRISGLIVGLWPQRIRGGGGRPWHAH). Residues 43–63 (LLFVFAFAMVVVGAVGEVSYG) form a helical membrane-spanning segment. The Extracellular segment spans residues 64–73 (CVHLDNLVVA). A helical transmembrane segment spans residues 74–94 (LEAFCPGTTKAVCVLKLWVFF). Residues 95 to 134 (RSNRRWAELVQRLRAILWESRRQEAQRMLVGLATTANRLS) lie on the Cytoplasmic side of the membrane. Residues 135-155 (LLLLSSGTATNAAFTLQPLIM) form a helical membrane-spanning segment. The Extracellular portion of the chain corresponds to 156 to 173 (GLYRWIVQLPGQTELPFN). A helical membrane pass occupies residues 174 to 194 (IILPSFAVQPGVFPLTYVLLT). The Cytoplasmic portion of the chain corresponds to 195-201 (ASGACTV). The helical transmembrane segment at 202–222 (FAFSFVDGFFICSCLYICGAF) threads the bilayer. Topologically, residues 223–276 (RLVQQDIRRIFADLHGDSVDVFTEEMNAEVRHRLAQVVERHNAIIDFCTDLTRQ) are extracellular. A helical membrane pass occupies residues 277-297 (FTVIVLMHFLSAAFVLCSTIL). Over 298–307 (DIMLNTSSLS) the chain is Cytoplasmic. Residues 308-328 (GLTYICYIIAALTQLFLYCFG) form a helical membrane-spanning segment. The Extracellular segment spans residues 329-402 (GNHVSESSAA…SYITLLKTFL (74 aa)).

This sequence belongs to the insect chemoreceptor superfamily. Heteromeric odorant receptor channel (TC 1.A.69) family. Or1a subfamily. In terms of assembly, interacts with Orco. Complexes exist early in the endomembrane system in olfactory sensory neurons (OSNs), coupling these complexes to the conserved ciliary trafficking pathway. As to expression, not expressed in either the antenna or maxillary palp.

The protein resides in the cell membrane. Functionally, odorant receptor which mediates acceptance or avoidance behavior, depending on its substrates. The odorant receptor repertoire encodes a large collection of odor stimuli that vary widely in identity, intensity, and duration. May form a complex with Orco to form odorant-sensing units, providing sensitive and prolonged odorant signaling and calcium permeability. This Drosophila melanogaster (Fruit fly) protein is Odorant receptor 22c (Or22c).